The sequence spans 279 residues: Conserved oligomeric Golgi complex subunit 7 (279 aa).

In terms of assembly, component of the conserved oligomeric Golgi (COG or Sec34/Sec35) complex which consists of eight different proteins COG1-COG8.

The protein localises to the golgi apparatus membrane. In terms of biological role, acts as a component of the peripheral membrane COG complex that is involved in intra-Golgi protein trafficking. COG is located at the cis-Golgi, and regulates tethering of retrograde intra-Golgi vesicles and possibly a number of other membrane trafficking events. This Saccharomyces cerevisiae (strain ATCC 204508 / S288c) (Baker's yeast) protein is Conserved oligomeric Golgi complex subunit 7 (COG7).